The sequence spans 179 residues: Large ribosomal subunit protein bL9 (179 aa).

Residues Pro-156–Glu-179 are disordered. The span at Glu-157 to Glu-166 shows a compositional bias: low complexity. The segment covering Pro-167–Glu-179 has biased composition (acidic residues).

Belongs to the bacterial ribosomal protein bL9 family.

Its function is as follows. Binds to the 23S rRNA. This Porphyromonas gingivalis (strain ATCC 33277 / DSM 20709 / CIP 103683 / JCM 12257 / NCTC 11834 / 2561) protein is Large ribosomal subunit protein bL9.